A 103-amino-acid chain; its full sequence is Small ribosomal subunit protein uS10 (103 aa).

Belongs to the universal ribosomal protein uS10 family. As to quaternary structure, part of the 30S ribosomal subunit.

Functionally, involved in the binding of tRNA to the ribosomes. The sequence is that of Small ribosomal subunit protein uS10 from Alcanivorax borkumensis (strain ATCC 700651 / DSM 11573 / NCIMB 13689 / SK2).